The primary structure comprises 447 residues: NADH-ubiquinone oxidoreductase chain 4 (447 aa).

Helical transmembrane passes span 28–48 (IFLATCLFMIKISSNYYFCDI), 56–76 (MISYGLILLSFWICGLMLMAS), 85–105 (YVNLFLFMIVFLLLMLIFTFS), 110–130 (FMFYLFFESSLIPTLFLILGW), 141–161 (IYLLFYTLLASLPLLIGIFYI), 183–203 (FLYLCMIFAFLVKMPMFLVHL), 213–233 (PVSGSMILAGVLLKLGGYGLL), 246–266 (FNYIWISISLIGGVLVSLICL), 273–293 (ALIAYSSVAHMGIVLSGLMTM), 301–321 (SYTLMIAHGLCSSGLFCLANI), 343–365 (SLSLWWFLLCSGNMAAPPTLNLL), 380–400 (LTMISLAFLSFFSAAYTLYLF), and 409–431 (YSGVYFFSSGTTREFLVLMLHWL).

It belongs to the complex I subunit 4 family.

It is found in the mitochondrion membrane. The catalysed reaction is a ubiquinone + NADH + 5 H(+)(in) = a ubiquinol + NAD(+) + 4 H(+)(out). Its function is as follows. Core subunit of the mitochondrial membrane respiratory chain NADH dehydrogenase (Complex I) that is believed to belong to the minimal assembly required for catalysis. Complex I functions in the transfer of electrons from NADH to the respiratory chain. The immediate electron acceptor for the enzyme is believed to be ubiquinone. In Aedes aegypti (Yellowfever mosquito), this protein is NADH-ubiquinone oxidoreductase chain 4.